A 578-amino-acid polypeptide reads, in one-letter code: CTP synthase 2 (578 aa).

The region spanning 305–564 is the Glutamine amidotransferase type-1 domain; it reads KIALVGKYTN…VAAASGTLGD (260 aa). Active-site for GATase activity residues include Cys-404, His-537, and Glu-539.

The protein belongs to the CTP synthase family. As to quaternary structure, homodimer. Oligomerizes to a tetramer in the presence of its substrates UTP and ATP. The cofactor is Mg(2+).

The protein localises to the cytoplasm. The enzyme catalyses UTP + L-glutamine + ATP + H2O = CTP + L-glutamate + ADP + phosphate + 2 H(+). Its pathway is pyrimidine metabolism; CTP biosynthesis via de novo pathway; CTP from UDP: step 2/2. With respect to regulation, activated by GTP. Subject to allosteric product inhibition by CTP. Inhibited by p-chloromercuriphenylsulfonic acid, N-ethylmaleimide and cyclopentenylcytosine (CPEC). Catalyzes the ATP-dependent amination of UTP to CTP with either L-glutamine or ammonia as the source of nitrogen. Plays an important role in the regulation of phospholipid synthesis. The sequence is that of CTP synthase 2 (URA8) from Saccharomyces cerevisiae (strain YJM789) (Baker's yeast).